The chain runs to 336 residues: Ketol-acid reductoisomerase (NADP(+)) (336 aa).

The 182-residue stretch at 1 to 182 folds into the KARI N-terminal Rossmann domain; sequence MAVIYYDKDA…GVTRAGVIET (182 aa). NADP(+) is bound by residues 25–28, Arg-48, Ser-51, Ser-53, and 83–86; these read YGSQ and DENQ. The active site involves His-108. Residue Gly-134 participates in NADP(+) binding. A KARI C-terminal knotted domain is found at 183 to 328; that stretch reads TFKEETETDL…KELRKMMPWL (146 aa). Mg(2+)-binding residues include Asp-191, Glu-195, Glu-227, and Glu-231. Ser-252 is a substrate binding site.

Belongs to the ketol-acid reductoisomerase family. The cofactor is Mg(2+).

The catalysed reaction is (2R)-2,3-dihydroxy-3-methylbutanoate + NADP(+) = (2S)-2-acetolactate + NADPH + H(+). The enzyme catalyses (2R,3R)-2,3-dihydroxy-3-methylpentanoate + NADP(+) = (S)-2-ethyl-2-hydroxy-3-oxobutanoate + NADPH + H(+). The protein operates within amino-acid biosynthesis; L-isoleucine biosynthesis; L-isoleucine from 2-oxobutanoate: step 2/4. It functions in the pathway amino-acid biosynthesis; L-valine biosynthesis; L-valine from pyruvate: step 2/4. Its function is as follows. Involved in the biosynthesis of branched-chain amino acids (BCAA). Catalyzes an alkyl-migration followed by a ketol-acid reduction of (S)-2-acetolactate (S2AL) to yield (R)-2,3-dihydroxy-isovalerate. In the isomerase reaction, S2AL is rearranged via a Mg-dependent methyl migration to produce 3-hydroxy-3-methyl-2-ketobutyrate (HMKB). In the reductase reaction, this 2-ketoacid undergoes a metal-dependent reduction by NADPH to yield (R)-2,3-dihydroxy-isovalerate. In Thermotoga petrophila (strain ATCC BAA-488 / DSM 13995 / JCM 10881 / RKU-1), this protein is Ketol-acid reductoisomerase (NADP(+)).